Reading from the N-terminus, the 210-residue chain is MADTKEMKAVLFGPVLANNPIALQVLGICSALAVTSSLKNALIMSIALTLVTAFSSFFISTIRNQIPSSVRIIVQMTIIASLVIVVDQVLQAFSYATAKELSVFIGLIITNCIVMGRAEAYAMKSPPLMSFLDGIGNGLGYSVVLLTVGFIRELFGKGSLFGVDIIPLVQNGGWYQPMGLLILPPSAFFIIGLFIWVLRTYKKDQVEAKA.

6 helical membrane-spanning segments follow: residues 9–29 (AVLFGPVLANNPIALQVLGIC), 42–62 (LIMSIALTLVTAFSSFFISTI), 72–92 (IIVQMTIIASLVIVVDQVLQA), 96–116 (ATAKELSVFIGLIITNCIVMG), 131–151 (FLDGIGNGLGYSVVLLTVGFI), and 178–198 (MGLLILPPSAFFIIGLFIWVL).

Belongs to the NqrDE/RnfAE family. As to quaternary structure, composed of six subunits; NqrA, NqrB, NqrC, NqrD, NqrE and NqrF.

Its subcellular location is the cell inner membrane. It catalyses the reaction a ubiquinone + n Na(+)(in) + NADH + H(+) = a ubiquinol + n Na(+)(out) + NAD(+). Its function is as follows. NQR complex catalyzes the reduction of ubiquinone-1 to ubiquinol by two successive reactions, coupled with the transport of Na(+) ions from the cytoplasm to the periplasm. NqrA to NqrE are probably involved in the second step, the conversion of ubisemiquinone to ubiquinol. This Pseudoalteromonas translucida (strain TAC 125) protein is Na(+)-translocating NADH-quinone reductase subunit D.